Consider the following 436-residue polypeptide: MSAAAASSAAGDSAKQPLLHHQRGNPPHVASVSSPSLPSAPPGALAGGRRFPGGLDVPNLKKRGGGTRSWIRVEAATASVQTLEVDKATMMRRCELPARDLRLLDPLFVYPSTILGRERAIVVNLEQIRCVITADEVLLLNSLDSYVLQYAAELQRRLLQRAEGDELPFEFRALELALEAACSFLDAQAAELEIEAYPLLDELTSKISTLNLERVRRLKSRLVALTRRVQKVRDEIEQLMDDDGDMAEMYLSEKKLRTEASFYGDQSMLGYNSVGDGTSFSAPVSPVSSPTESRKLEKAFSLCRSRHDSVKSSDNTATEHIQELEMLLEAYFVVIDSTLNKLTSLKEYIDDTEDFINIQLDNVRNQLIQFELLLTTATFVVAIFGVVAGIFGMNFETSVFSIQNAFQWVLIITGVIGAFIFCGFLWFFKYKRLMPL.

2 stretches are compositionally biased toward low complexity: residues 1–14 and 29–54; these read MSAA…GDSA and VASV…FPGG. A disordered region spans residues 1–60; sequence MSAAAASSAAGDSAKQPLLHHQRGNPPHVASVSSPSLPSAPPGALAGGRRFPGGLDVPNL. Residues 176–242 adopt a coiled-coil conformation; sequence LALEAACSFL…RDEIEQLMDD (67 aa). 2 helical membrane passes run 372–392 and 408–428; these read LLLT…GIFG and WVLI…LWFF. A Required for magnesium transport activity motif is present at residues 392–394; the sequence is GMN.

Belongs to the CorA metal ion transporter (MIT) (TC 1.A.35.5) family.

It localises to the membrane. In terms of biological role, magnesium transporter that may mediate the influx of magnesium. The protein is Magnesium transporter MRS2-B (MRS2-B) of Oryza sativa subsp. indica (Rice).